Reading from the N-terminus, the 489-residue chain is Glycogen synthase (489 aa).

ADP-alpha-D-glucose is bound at residue arginine 20.

The protein belongs to the glycosyltransferase 1 family. Bacterial/plant glycogen synthase subfamily.

It catalyses the reaction [(1-&gt;4)-alpha-D-glucosyl](n) + ADP-alpha-D-glucose = [(1-&gt;4)-alpha-D-glucosyl](n+1) + ADP + H(+). It functions in the pathway glycan biosynthesis; glycogen biosynthesis. In terms of biological role, synthesizes alpha-1,4-glucan chains using ADP-glucose. The sequence is that of Glycogen synthase from Chlorobium phaeobacteroides (strain DSM 266 / SMG 266 / 2430).